We begin with the raw amino-acid sequence, 101 residues long: Large ribosomal subunit protein uL23 (101 aa).

The protein belongs to the universal ribosomal protein uL23 family. In terms of assembly, part of the 50S ribosomal subunit. Contacts protein L29, and trigger factor when it is bound to the ribosome.

Its function is as follows. One of the early assembly proteins it binds 23S rRNA. One of the proteins that surrounds the polypeptide exit tunnel on the outside of the ribosome. Forms the main docking site for trigger factor binding to the ribosome. In Corynebacterium glutamicum (strain R), this protein is Large ribosomal subunit protein uL23.